The sequence spans 154 residues: Isotocin-neurophysin IT 1 (154 aa).

A signal peptide spans 1 to 20 (MSGSMFSVFSLLYLLSVCSA). Cysteines 21 and 26 form a disulfide. G29 is modified (glycine amide). 7 disulfide bridges follow: C42/C86, C45/C59, C53/C76, C60/C66, C93/C105, C99/C117, and C106/C111.

It belongs to the vasopressin/oxytocin family.

In terms of biological role, isotocin causes contraction of smooth muscles. The sequence is that of Isotocin-neurophysin IT 1 from Catostomus commersonii (White sucker).